Reading from the N-terminus, the 340-residue chain is 4-amino-5-hydroxymethyl-2-methylpyrimidine phosphate synthase THI5 (340 aa).

An N6-(pyridoxal phosphate)lysine modification is found at Lys62. Residue His66 is part of the active site. A pyridoxal 5'-phosphate-binding site is contributed by 115–118 (GEFG). The CCCFC; essential for catalytic activity, may be the site of iron coordination motif lies at 195 to 199 (CCCFC).

Belongs to the NMT1/THI5 family. In terms of assembly, homodimer. Fe cation serves as cofactor.

The catalysed reaction is N(6)-(pyridoxal phosphate)-L-lysyl-[4-amino-5-hydroxymethyl-2-methylpyrimidine phosphate synthase] + L-histidyl-[4-amino-5-hydroxymethyl-2-methylpyrimidine phosphate synthase] + 2 Fe(3+) + 4 H2O = L-lysyl-[4-amino-5-hydroxymethyl-2-methylpyrimidine phosphate synthase] + (2S)-2-amino-5-hydroxy-4-oxopentanoyl-[4-amino-5-hydroxymethyl-2-methylpyrimidine phosphate synthase] + 4-amino-2-methyl-5-(phosphooxymethyl)pyrimidine + 3-oxopropanoate + 2 Fe(2+) + 2 H(+). It participates in cofactor biosynthesis; thiamine diphosphate biosynthesis. Its function is as follows. Responsible for the formation of the pyrimidine heterocycle in the thiamine biosynthesis pathway. Catalyzes the formation of hydroxymethylpyrimidine phosphate (HMP-P) from histidine and pyridoxal phosphate (PLP). The protein uses PLP and the active site histidine to form HMP-P, generating an inactive enzyme. The enzyme can only undergo a single turnover, which suggests it is a suicide enzyme. The chain is 4-amino-5-hydroxymethyl-2-methylpyrimidine phosphate synthase THI5 from Saccharomyces cerevisiae (strain ATCC 204508 / S288c) (Baker's yeast).